Consider the following 318-residue polypeptide: tRNA-cytidine(32) 2-sulfurtransferase (318 aa).

A PP-loop motif motif is present at residues Ser65–Ser70. Residues Cys140, Cys143, and Cys231 each coordinate [4Fe-4S] cluster.

Belongs to the TtcA family. As to quaternary structure, homodimer. Requires Mg(2+) as cofactor. The cofactor is [4Fe-4S] cluster.

It localises to the cytoplasm. It catalyses the reaction cytidine(32) in tRNA + S-sulfanyl-L-cysteinyl-[cysteine desulfurase] + AH2 + ATP = 2-thiocytidine(32) in tRNA + L-cysteinyl-[cysteine desulfurase] + A + AMP + diphosphate + H(+). The protein operates within tRNA modification. In terms of biological role, catalyzes the ATP-dependent 2-thiolation of cytidine in position 32 of tRNA, to form 2-thiocytidine (s(2)C32). The sulfur atoms are provided by the cysteine/cysteine desulfurase (IscS) system. The chain is tRNA-cytidine(32) 2-sulfurtransferase from Herminiimonas arsenicoxydans.